The chain runs to 248 residues: Serine/arginine-rich splicing factor 1 (248 aa).

Ser2 is modified (N-acetylserine). Ser2 is subject to Phosphoserine. Residues 16–91 enclose the RRM 1 domain; that stretch reads CRIYVGNLPP…YRLRVEFPRS (76 aa). Lys30 is covalently cross-linked (Glycyl lysine isopeptide (Lys-Gly) (interchain with G-Cter in SUMO2)). Lys38 carries the post-translational modification N6-acetyllysine; alternate. Residue Lys38 forms a Glycyl lysine isopeptide (Lys-Gly) (interchain with G-Cter in SUMO2); alternate linkage. The interval 88 to 134 is disordered; sequence FPRSGRGTGRGGGGGGGGGAPRGRYGPPSRRSENRVVVSGLPPSGSW. Asymmetric dimethylarginine; alternate is present on residues Arg93, Arg97, and Arg109. 3 positions are modified to omega-N-methylarginine; alternate: Arg93, Arg97, and Arg109. Gly residues predominate over residues 93–108; that stretch reads RGTGRGGGGGGGGGAP. Residue Arg111 is modified to Omega-N-methylarginine. The region spanning 121 to 195 is the RRM 2 domain; sequence NRVVVSGLPP…ETAYIRVKVD (75 aa). A Phosphoserine modification is found at Ser133. N6-acetyllysine is present on Lys179. Residues 191-248 form a disordered region; it reads RVKVDGPRSPSYGRSRSRSRSRSRNRSRSNSRSRSYSPRRSRGSPRYSPRHSRSRSRT. The segment at 198–247 is interaction with SAFB1; it reads RSPSYGRSRSRSRSRSRNRSRSNSRSRSYSPRRSRGSPRYSPRHSRSRSR. Phosphoserine occurs at positions 199 and 201. Tyr202 carries the phosphotyrosine modification. Phosphoserine is present on residues Ser205, Ser207, Ser209, Ser231, Ser234, and Ser238. Positions 205–248 are enriched in basic residues; it reads SRSRSRSRSRNRSRSNSRSRSYSPRRSRGSPRYSPRHSRSRSRT.

This sequence belongs to the splicing factor SR family. In terms of assembly, consists of two polypeptides of p32 and p33. Identified in the spliceosome C complex. Component of a ribonucleoprotein complex containing mRNAs and RNA-binding proteins including DDX5, HNRNPH2 and SRSF1 as well as splicing regulator ARVCF. In vitro, self-associates and binds SRSF2, SNRNP70 and U2AF1 but not U2AF2. Binds SREK1/SFRS12. Interacts with SAFB/SAFB1. Interacts with PSIP1/LEDGF. Interacts with RSRC1 (via Arg/Ser-rich domain). Interacts with ZRSR2/U2AF1-RS2. Interacts with CCDC55 (via C-terminus). Interacts with SRPK1 and a sliding docking interaction is essential for its sequential and processive phosphorylation by SRPK1. Interacts with NXF1. Interacts with CCNL1, CCNL2 and CDK11B. Interacts with RRP1B. Interacts (when phosphorylated in its RS domain) with TNPO3; promoting nuclear import. Interacts with ILDR1 (via C-terminus) and ILDR2. In terms of processing, phosphorylated by CLK1, CLK2, CLK3 and CLK4. Phosphorylated by SRPK1 at multiple serines in its RS domain via a directional (C-terminal to N-terminal) and a dual-track mechanism incorporating both processive phosphorylation (in which the kinase stays attached to the substrate after each round of phosphorylation) and distributive phosphorylation steps (in which the kinase and substrate dissociate after each phosphorylation event). The RS domain of SRSF1 binds to a docking groove in the large lobe of the kinase domain of SRPK1 and this induces certain structural changes in SRPK1 and/or RRM 2 domain of SRSF1, allowing RRM 2 to bind the kinase and initiate phosphorylation. The cycles continue for several phosphorylation steps in a processive manner (steps 1-8) until the last few phosphorylation steps (approximately steps 9-12). During that time, a mechanical stress induces the unfolding of the beta-4 motif in RRM 2, which then docks at the docking groove of SRPK1. This also signals RRM 2 to begin to dissociate, which facilitates SRSF1 dissociation after phosphorylation is completed. Asymmetrically dimethylated at arginines, probably by PRMT1, methylation promotes localization to nuclear speckles.

The protein resides in the cytoplasm. It localises to the nucleus speckle. Plays a role in preventing exon skipping, ensuring the accuracy of splicing and regulating alternative splicing. Interacts with other spliceosomal components, via the RS domains, to form a bridge between the 5'- and 3'-splice site binding components, U1 snRNP and U2AF. Can stimulate binding of U1 snRNP to a 5'-splice site-containing pre-mRNA. Binds to purine-rich RNA sequences, either the octamer, 5'-RGAAGAAC-3' (r=A or G) or the decamers, AGGACAGAGC/AGGACGAAGC. Binds preferentially to the 5'-CGAGGCG-3' motif in vitro. Three copies of the octamer constitute a powerful splicing enhancer in vitro, the ASF/SF2 splicing enhancer (ASE) which can specifically activate ASE-dependent splicing. May function as export adapter involved in mRNA nuclear export through the TAP/NXF1 pathway. This chain is Serine/arginine-rich splicing factor 1 (SRSF1), found in Pongo abelii (Sumatran orangutan).